We begin with the raw amino-acid sequence, 888 residues long: Leukocyte tyrosine kinase receptor (888 aa).

Residues Met-1–Thr-16 form the signal peptide. Residues Ile-17–Pro-421 are Extracellular-facing. Disulfide bonds link Cys-73/Cys-86 and Cys-168/Cys-179. The segment at Leu-226 to Gly-294 is disordered. Gly residues predominate over residues Gly-260–Gly-273. Cys-297 and Cys-319 form a disulfide bridge. N-linked (GlcNAc...) asparagine glycosylation is found at Asn-377 and Asn-409. Residues Leu-422–Val-446 traverse the membrane as a helical segment. The Cytoplasmic segment spans residues Asn-447–Gln-888. The Protein kinase domain maps to Val-506–Val-782. ATP-binding positions include Leu-512–Val-520 and Lys-540. Residue Asp-639 is the Proton acceptor of the active site. A Phosphotyrosine; by autocatalysis modification is found at Tyr-672. A disordered region spans residues Thr-857–Gln-888. Over residues Asn-877 to Gln-888 the composition is skewed to polar residues.

It belongs to the protein kinase superfamily. Tyr protein kinase family. Insulin receptor subfamily. In terms of assembly, homodimer; homodimerizes following ligand-binding. Part of a complex including LTK, TNK2 and GRB2, in which GRB2 promotes LTK recruitment by TNK2. In terms of processing, phosphorylated at tyrosine residues by autocatalysis, which activates kinase activity. Subsets of lymphoid and neuronal cells.

It localises to the cell membrane. The protein resides in the endoplasmic reticulum. The catalysed reaction is L-tyrosyl-[protein] + ATP = O-phospho-L-tyrosyl-[protein] + ADP + H(+). Its activity is regulated as follows. Activated by ligand-binding, leading to homodimerization and autophosphorylation. Receptor with a tyrosine-protein kinase activity. Following activation by ALKAL1 or ALKAL2 ligands at the cell surface, transduces an extracellular signal into an intracellular response. Ligand-binding to the extracellular domain induces tyrosine kinase activation, leading to activation of the mitogen-activated protein kinase (MAPK) pathway. Phosphorylates almost exclusively at the first tyrosine of the Y-x-x-x-Y-Y motif. The exact function of this protein is not known; studies with chimeric proteins demonstrate its ability to promote growth and specifically neurite outgrowth, and cell survival. Involved in regulation of the secretory pathway involving endoplasmic reticulum (ER) export sites (ERESs) and ER to Golgi transport. The sequence is that of Leukocyte tyrosine kinase receptor from Mus musculus (Mouse).